The sequence spans 428 residues: Adenylosuccinate synthetase (428 aa).

GTP is bound by residues 12–18 (GDEGKGK) and 40–42 (GHT). Aspartate 13 serves as the catalytic Proton acceptor. Mg(2+) is bound by residues aspartate 13 and glycine 40. Residues 13–16 (DEGK), 38–41 (NAGH), threonine 127, arginine 141, glutamine 222, threonine 237, and arginine 301 each bind IMP. Catalysis depends on histidine 41, which acts as the Proton donor. 297–303 (TVTKRPR) serves as a coordination point for substrate. GTP contacts are provided by residues arginine 303, 329-331 (CLD), and 411-413 (SVG).

This sequence belongs to the adenylosuccinate synthetase family. Homodimer. It depends on Mg(2+) as a cofactor.

The protein localises to the cytoplasm. It carries out the reaction IMP + L-aspartate + GTP = N(6)-(1,2-dicarboxyethyl)-AMP + GDP + phosphate + 2 H(+). It functions in the pathway purine metabolism; AMP biosynthesis via de novo pathway; AMP from IMP: step 1/2. Its function is as follows. Plays an important role in the de novo pathway of purine nucleotide biosynthesis. Catalyzes the first committed step in the biosynthesis of AMP from IMP. The protein is Adenylosuccinate synthetase of Levilactobacillus brevis (strain ATCC 367 / BCRC 12310 / CIP 105137 / JCM 1170 / LMG 11437 / NCIMB 947 / NCTC 947) (Lactobacillus brevis).